The primary structure comprises 957 residues: Exoribonuclease II, mitochondrial (957 aa).

The N-terminal 54 residues, 1 to 54, are a transit peptide targeting the mitochondrion; it reads MNYRQLFLLQNVNLESNYLLKRVCLSLKLSPCKLTRKFHHACPSSSKVLKYFRI. The region spanning 503–843 is the RNB domain; it reads RVDLRHLKAF…FTHHQIQSVL (341 aa).

This sequence belongs to the RNR ribonuclease family.

It localises to the mitochondrion. The enzyme catalyses Exonucleolytic cleavage in the 3'- to 5'-direction to yield nucleoside 5'-phosphates.. In terms of biological role, required for intron-independent turnover and processing of mitochondrial RNA. Participates in 3'-mtRNA processing where it hydrolyzes single-stranded RNA or partially double-stranded RNA with 3'-single-stranded tails. The chain is Exoribonuclease II, mitochondrial (rpm1) from Schizosaccharomyces pombe (strain 972 / ATCC 24843) (Fission yeast).